A 414-amino-acid polypeptide reads, in one-letter code: Argininosuccinate synthase (414 aa).

ATP-binding positions include Ala-9 to Ser-17 and Ala-35. The L-citrulline site is built by Tyr-86 and Ser-91. Ser-114–Asn-122 lines the ATP pocket. L-aspartate-binding residues include Thr-118, Asn-122, and Asp-123. Asn-122 contributes to the L-citrulline binding site. Arg-126, Ser-179, Ser-188, Glu-269, and Tyr-281 together coordinate L-citrulline.

This sequence belongs to the argininosuccinate synthase family. In terms of assembly, homotetramer.

The protein localises to the cytoplasm. It localises to the cytosol. The enzyme catalyses L-citrulline + L-aspartate + ATP = 2-(N(omega)-L-arginino)succinate + AMP + diphosphate + H(+). The protein operates within amino-acid biosynthesis; L-arginine biosynthesis; L-arginine from L-ornithine and carbamoyl phosphate: step 2/3. It participates in nitrogen metabolism; urea cycle; (N(omega)-L-arginino)succinate from L-aspartate and L-citrulline: step 1/1. Functionally, one of the enzymes of the urea cycle, the metabolic pathway transforming neurotoxic amonia produced by protein catabolism into inocuous urea in the liver of ureotelic animals. Catalyzes the formation of arginosuccinate from aspartate, citrulline and ATP and together with ASL it is responsible for the biosynthesis of arginine in most body tissues. This Danio rerio (Zebrafish) protein is Argininosuccinate synthase.